The primary structure comprises 423 residues: MKDIITRHKSGEHIGICSVCSAHPLVIEAALRFDLSTNNKVLIEATSNQVNQFGGYTGMQPADFRDFVYNIARTVGFPAERIILGGDHLGPNCWQDEPAAVAMEKSIDLIKAYVAAGFSKIHLDASMSCADDPVPLDPGVVAERAARLCQAAEETASDEQKRHLTYVIGTEVPVPGGEASTIGSVHVTRAQDAAATLETHEAAFRKLGLDAALERVIAIVVQPGVEFDHTQIIHYQPQEAKALSAWIESTPMVYEAHSTDYQTRQAYRALVRDHFAILKVGPALTFALREAIFALAQMENELIAPESRSRVMEVIDEVMLNEPGYWKKYYRPTWSQAMVDIHFSLSDRIRYYWPHPRIRQSVEKLIANLTDAKLPLGLISQYMPVQFERLSLNELNAEPHALILDKIQDVLRAYRYGCSSETA.

The protein belongs to the GatZ/KbaZ family. GatZ subfamily. As to quaternary structure, forms a complex with GatY.

It functions in the pathway carbohydrate metabolism; D-tagatose 6-phosphate degradation; D-glyceraldehyde 3-phosphate and glycerone phosphate from D-tagatose 6-phosphate: step 2/2. In terms of biological role, component of the tagatose-1,6-bisphosphate aldolase GatYZ that is required for full activity and stability of the Y subunit. Could have a chaperone-like function for the proper and stable folding of GatY. When expressed alone, GatZ does not show any aldolase activity. Is involved in the catabolism of galactitol. In Klebsiella pneumoniae subsp. pneumoniae (strain ATCC 700721 / MGH 78578), this protein is D-tagatose-1,6-bisphosphate aldolase subunit GatZ.